The chain runs to 238 residues: Probable transcriptional regulatory protein SAB0618 (238 aa).

Belongs to the TACO1 family. YeeN subfamily.

The protein resides in the cytoplasm. The sequence is that of Probable transcriptional regulatory protein SAB0618 from Staphylococcus aureus (strain bovine RF122 / ET3-1).